Consider the following 203-residue polypeptide: Cardiotrophin-1 (203 aa).

It belongs to the IL-6 superfamily. Expressed in the ventricle and atrium of adult rats. Also detected in the lung, kidney, liver, skeletal muscle, stomach and urinary bladder. Not detected in brain, colon, testis, spleen or thymus. Overexpressed in the ventricles in the case of hypertension and hypertrophy.

Its subcellular location is the secreted. Its function is as follows. Induces cardiac myocyte hypertrophy in vitro. Binds to and activates the ILST/gp130 receptor. In Rattus norvegicus (Rat), this protein is Cardiotrophin-1 (Ctf1).